The sequence spans 280 residues: Pyridoxal 5'-phosphate synthase subunit PdxS (280 aa).

D-ribose 5-phosphate is bound at residue aspartate 12. The active-site Schiff-base intermediate with D-ribose 5-phosphate is the lysine 69. Glycine 141 provides a ligand contact to D-ribose 5-phosphate. Arginine 153 contacts D-glyceraldehyde 3-phosphate. D-ribose 5-phosphate contacts are provided by residues glycine 202 and 223-224; that span reads GS.

The protein belongs to the PdxS/SNZ family. In the presence of PdxT, forms a dodecamer of heterodimers.

The catalysed reaction is aldehydo-D-ribose 5-phosphate + D-glyceraldehyde 3-phosphate + L-glutamine = pyridoxal 5'-phosphate + L-glutamate + phosphate + 3 H2O + H(+). It functions in the pathway cofactor biosynthesis; pyridoxal 5'-phosphate biosynthesis. In terms of biological role, catalyzes the formation of pyridoxal 5'-phosphate from ribose 5-phosphate (RBP), glyceraldehyde 3-phosphate (G3P) and ammonia. The ammonia is provided by the PdxT subunit. Can also use ribulose 5-phosphate and dihydroxyacetone phosphate as substrates, resulting from enzyme-catalyzed isomerization of RBP and G3P, respectively. The protein is Pyridoxal 5'-phosphate synthase subunit PdxS of Fusobacterium nucleatum subsp. nucleatum (strain ATCC 25586 / DSM 15643 / BCRC 10681 / CIP 101130 / JCM 8532 / KCTC 2640 / LMG 13131 / VPI 4355).